Here is a 715-residue protein sequence, read N- to C-terminus: Arginine kinase (715 aa).

2 Approximate repeats span residues 1–366 and 367–715; these read MADP…IAKK and RSVF…KSTK. The Phosphagen kinase N-terminal 1 domain maps to 11-95; it reads KSKNAFPDPL…FDAIIEDYHS (85 aa). 68-72 is a substrate binding site; the sequence is GVGVY. Residues 123-362 enclose the Phosphagen kinase C-terminal 1 domain; the sequence is YIRSTRIRVA…KALMELEKEA (240 aa). ATP-binding positions include 126–130 and His189; that span reads STRIR. Residue Glu229 participates in substrate binding. Arg233 contributes to the ATP binding site. Position 275 (Cys275) interacts with substrate. ATP contacts are provided by residues 284–288 and 312–317; these read RASVH and RGIHGE. Residue Glu317 participates in substrate binding. In terms of domain architecture, Phosphagen kinase N-terminal 2 spans 365 to 447; sequence KKRSVFPEVL…FDKIVEDYHS (83 aa). A Phosphagen kinase C-terminal 2 domain is found at 475–714; the sequence is YIRSTRIRVA…KKLLEIEKST (240 aa).

Belongs to the ATP:guanido phosphotransferase family. Monomer.

It catalyses the reaction L-arginine + ATP = N(omega)-phospho-L-arginine + ADP + H(+). The chain is Arginine kinase from Anthopleura japonica (Sea anemone).